Consider the following 70-residue polypeptide: UPF0519 protein D (70 aa).

Belongs to the UPF0519 family.

The sequence is that of UPF0519 protein D from Dictyostelium discoideum (Social amoeba).